The primary structure comprises 389 residues: Chalcone synthase E (389 aa).

The active site involves C164.

The protein belongs to the thiolase-like superfamily. Chalcone/stilbene synthases family.

The enzyme catalyses (E)-4-coumaroyl-CoA + 3 malonyl-CoA + 3 H(+) = 2',4,4',6'-tetrahydroxychalcone + 3 CO2 + 4 CoA. It participates in secondary metabolite biosynthesis; flavonoid biosynthesis. Functionally, the primary product of this enzyme is 4,2',4',6'-tetrahydroxychalcone (also termed naringenin-chalcone or chalcone) which can under specific conditions spontaneously isomerize into naringenin. This Ipomoea purpurea (Common morning glory) protein is Chalcone synthase E (CHSE).